The sequence spans 389 residues: MCNFVFCFGSHNKKLLSDRIKSSKKGWYLYLGKKYRIGIKIITLSGRKYISVNFNKSIEFMKFLVRKNIHCNIFDQSHKCKSHNHYKNYLRYIIDNKCMDHIKIFYGKFFPLIRSQGRINNIIDIAKPLVLFENYTVDMDLGIDQETIMCIFKYGKMIDMASLLIHVLCTISDVTIEFLDDMLSIYRHKIIKLLTKEKHELDNDFNIMPMDVFLIPSFRNDDVDMFYFVVEEMFKLHDYIDTGNLTERELNVFNIFVYKLNADTINATINTHLIGLNHIHDFLVFYCPKIFNQLVLKLNDETSLNESIIFDILQLDFIEYMITVCETIGNNNPKILNKFLRYAKSTEMAQLLIDYDADYEKLYKSSKFHECNDCVKHFIENLVEETIDT.

This sequence belongs to the mimivirus L17x/L18x family.

This is an uncharacterized protein from Acanthamoeba polyphaga mimivirus (APMV).